A 537-amino-acid polypeptide reads, in one-letter code: CTP synthase (537 aa).

Positions 1–267 (MTNTKFVFVT…ISVLEERLFG (267 aa)) are amidoligase domain. Serine 15 is a CTP binding site. Serine 15 is a UTP binding site. An ATP-binding site is contributed by 16 to 21 (SVGKGI). Tyrosine 56 is an L-glutamine binding site. Aspartate 73 serves as a coordination point for ATP. Positions 73 and 141 each coordinate Mg(2+). CTP-binding positions include 148-150 (DIE), 188-193 (KTKPTQ), and lysine 224. UTP is bound by residues 188–193 (KTKPTQ) and lysine 224. One can recognise a Glutamine amidotransferase type-1 domain in the interval 297–535 (YVVLPDAYLS…LSEAVAKASP (239 aa)). Residue glycine 355 coordinates L-glutamine. Cysteine 382 serves as the catalytic Nucleophile; for glutamine hydrolysis. Residues 383–386 (LGMQ), glutamate 406, and arginine 463 each bind L-glutamine. Active-site residues include histidine 508 and glutamate 510.

It belongs to the CTP synthase family. Homotetramer.

It carries out the reaction UTP + L-glutamine + ATP + H2O = CTP + L-glutamate + ADP + phosphate + 2 H(+). It catalyses the reaction L-glutamine + H2O = L-glutamate + NH4(+). The catalysed reaction is UTP + NH4(+) + ATP = CTP + ADP + phosphate + 2 H(+). Its pathway is pyrimidine metabolism; CTP biosynthesis via de novo pathway; CTP from UDP: step 2/2. With respect to regulation, allosterically activated by GTP, when glutamine is the substrate; GTP has no effect on the reaction when ammonia is the substrate. The allosteric effector GTP functions by stabilizing the protein conformation that binds the tetrahedral intermediate(s) formed during glutamine hydrolysis. Inhibited by the product CTP, via allosteric rather than competitive inhibition. Its function is as follows. Catalyzes the ATP-dependent amination of UTP to CTP with either L-glutamine or ammonia as the source of nitrogen. Regulates intracellular CTP levels through interactions with the four ribonucleotide triphosphates. In Coprothermobacter proteolyticus (strain ATCC 35245 / DSM 5265 / OCM 4 / BT), this protein is CTP synthase.